The chain runs to 258 residues: Glucanase inhibitor protein 1 (258 aa).

The first 19 residues, 1-19, serve as a signal peptide directing secretion; that stretch reads MRVVPTLAAASLALGAVAG. A Peptidase S1 domain is found at 27–254; the sequence is ILGGGEVPIG…AIEWITSVTK (228 aa). A disulfide bridge links Cys-54 with Cys-70. Residues Asn-87, Asn-102, Asn-107, Asn-157, and Asn-185 are each glycosylated (N-linked (GlcNAc...) asparagine). 2 disulfide bridges follow: Cys-177–Cys-189 and Cys-199–Cys-230.

This sequence belongs to the peptidase S1 family. As to quaternary structure, forms an apoplastic complex with host endoglucanases in tomato leaves during P.infestans infection.

The protein resides in the secreted. Functionally, secreted effector that suppresses host plant glucan elicitor-mediated defense responses. Targets host endoglucanases and inhibits the endoglucanase-mediated release of elicitor-active glucan oligosaccharides from P.infestans cell walls. This is Glucanase inhibitor protein 1 from Phytophthora infestans (Potato late blight agent).